The primary structure comprises 290 residues: Ribonuclease 3 (290 aa).

Residues 20-145 (YSCFYRILGF…FIGAIYLDRG (126 aa)) enclose the RNase III domain. Mg(2+) is bound at residue glutamate 62. Residue aspartate 66 is part of the active site. Residues asparagine 131 and glutamate 134 each coordinate Mg(2+). Glutamate 134 is an active-site residue. Positions 173 to 242 (NFKSKLIEWS…AQMTLKKIKG (70 aa)) constitute a DRBM domain. Residues 254 to 290 (KTQNNVPAEDTTPESEMSLTAENQQIDEIISTEEISV) form a disordered region. Polar residues predominate over residues 267 to 279 (ESEMSLTAENQQI).

This sequence belongs to the ribonuclease III family. Homodimer. The cofactor is Mg(2+).

It localises to the cytoplasm. The enzyme catalyses Endonucleolytic cleavage to 5'-phosphomonoester.. Functionally, digests double-stranded RNA. Involved in the processing of primary rRNA transcript to yield the immediate precursors to the large and small rRNAs (23S and 16S). Processes some mRNAs, and tRNAs when they are encoded in the rRNA operon. Processes pre-crRNA and tracrRNA of type II CRISPR loci if present in the organism. The protein is Ribonuclease 3 of Bacteroides fragilis (strain YCH46).